A 327-amino-acid polypeptide reads, in one-letter code: tRNA pseudouridine synthase B (327 aa).

Residue aspartate 69 is the Nucleophile of the active site. 3 residues coordinate substrate: tyrosine 97, tyrosine 201, and leucine 222.

Belongs to the pseudouridine synthase TruB family. Type 1 subfamily.

It carries out the reaction uridine(55) in tRNA = pseudouridine(55) in tRNA. Its function is as follows. Responsible for synthesis of pseudouridine from uracil-55 in the psi GC loop of transfer RNAs. The chain is tRNA pseudouridine synthase B from Wigglesworthia glossinidia brevipalpis.